We begin with the raw amino-acid sequence, 159 residues long: Dynein 18 kDa light chain, flagellar outer arm (159 aa).

3 EF-hand domains span residues 18–53 (EEMDMCRKAFAMFDKDGSGTIDTKELRTALSALGQN), 54–89 (PTEEDMFVMISQVDQDGSRCIEFKEFVRVIQINKQM), and 129–159 (ELTVNVDRLVKDADRDLNGFLSYDEFRALLS). Positions 31, 33, 35, 37, 42, 67, 69, 71, 73, and 78 each coordinate Ca(2+).

In terms of assembly, consists of at least 3 heavy chains (alpha, beta and gamma), 2 intermediate chains and 8 light chains.

The protein localises to the cell projection. It is found in the cilium. Its subcellular location is the flagellum. Functionally, may be involved in the calcium-mediated regulation of dynein motor function. Binds 1 mole of calcium. This is Dynein 18 kDa light chain, flagellar outer arm from Chlamydomonas reinhardtii (Chlamydomonas smithii).